A 345-amino-acid chain; its full sequence is Methionine import ATP-binding protein MetN (345 aa).

An ABC transporter domain is found at isoleucine 2–isoleucine 241. ATP is bound at residue glycine 38–serine 45.

The protein belongs to the ABC transporter superfamily. Methionine importer (TC 3.A.1.24) family. The complex is composed of two ATP-binding proteins (MetN), two transmembrane proteins (MetI) and a solute-binding protein (MetQ).

It localises to the cell inner membrane. The enzyme catalyses L-methionine(out) + ATP + H2O = L-methionine(in) + ADP + phosphate + H(+). It carries out the reaction D-methionine(out) + ATP + H2O = D-methionine(in) + ADP + phosphate + H(+). In terms of biological role, part of the ABC transporter complex MetNIQ involved in methionine import. Responsible for energy coupling to the transport system. The protein is Methionine import ATP-binding protein MetN of Haemophilus influenzae (strain ATCC 51907 / DSM 11121 / KW20 / Rd).